The chain runs to 189 residues: Mediator of RNA polymerase II transcription subunit 30 (189 aa).

Residues 138–178 (SPESEDEIEKLEEQALSLRMEIAKKNVHVKELIDKLRELIA) are a coiled coil.

Belongs to the plant Mediator complex subunit 30 family. As to quaternary structure, component of the Mediator complex.

Its subcellular location is the nucleus. Component of the Mediator complex, a coactivator involved in the regulated transcription of nearly all RNA polymerase II-dependent genes. Mediator functions as a bridge to convey information from gene-specific regulatory proteins to the basal RNA polymerase II transcription machinery. The Mediator complex, having a compact conformation in its free form, is recruited to promoters by direct interactions with regulatory proteins and serves for the assembly of a functional preinitiation complex with RNA polymerase II and the general transcription factors. This Arabidopsis thaliana (Mouse-ear cress) protein is Mediator of RNA polymerase II transcription subunit 30 (MED30).